Reading from the N-terminus, the 765-residue chain is Alpha,alpha-trehalose phosphorylase (765 aa).

Substrate is bound at residue tryptophan 352–aspartate 353. Glutamate 479 acts as the Proton donor in catalysis. Lysine 591 to glutamine 592 lines the substrate pocket.

Belongs to the glycosyl hydrolase 65 family. In terms of assembly, homodimer.

The catalysed reaction is alpha,alpha-trehalose + phosphate = beta-D-glucose 1-phosphate + D-glucose. The protein operates within glycan degradation; trehalose degradation. Catalyzes the reversible phosphorolytic cleavage of trehalose. Phosphorolysis is specific for trehalose. The sequence is that of Alpha,alpha-trehalose phosphorylase (treP) from Geobacillus stearothermophilus (Bacillus stearothermophilus).